The following is a 555-amino-acid chain: Pyrophosphate--fructose 6-phosphate 1-phosphotransferase (555 aa).

Gly82 provides a ligand contact to diphosphate. Residue Arg146 participates in substrate binding. Asp176 is a Mg(2+) binding site. Substrate is bound by residues 204-206 (TID), 243-244 (KY), 251-253 (MGR), Glu312, and 428-431 (YEGR). Asp206 serves as the catalytic Proton acceptor.

It belongs to the phosphofructokinase type A (PFKA) family. PPi-dependent PFK group II subfamily. Clade 'Long' sub-subfamily. As to quaternary structure, homodimer. The cofactor is Mg(2+).

It is found in the cytoplasm. It carries out the reaction beta-D-fructose 6-phosphate + diphosphate = beta-D-fructose 1,6-bisphosphate + phosphate + H(+). Its pathway is carbohydrate degradation; glycolysis; D-glyceraldehyde 3-phosphate and glycerone phosphate from D-glucose: step 3/4. Its activity is regulated as follows. Non-allosteric. Catalyzes the phosphorylation of D-fructose 6-phosphate, the first committing step of glycolysis. Uses inorganic phosphate (PPi) as phosphoryl donor instead of ATP like common ATP-dependent phosphofructokinases (ATP-PFKs), which renders the reaction reversible, and can thus function both in glycolysis and gluconeogenesis. Consistently, PPi-PFK can replace the enzymes of both the forward (ATP-PFK) and reverse (fructose-bisphosphatase (FBPase)) reactions. The polypeptide is Pyrophosphate--fructose 6-phosphate 1-phosphotransferase (Borreliella burgdorferi (strain ATCC 35210 / DSM 4680 / CIP 102532 / B31) (Borrelia burgdorferi)).